Reading from the N-terminus, the 555-residue chain is Meiotic mRNA stability protein kinase SSN3 (555 aa).

The region spanning 75 to 463 is the Protein kinase domain; that stretch reads YEVIGYIAAG…AFNALEHKYF (389 aa). 81–89 provides a ligand contact to ATP; the sequence is IAAGTYGKV. Polar residues predominate over residues 100–138; that stretch reads TNSANGSSLNGTNAKIPQFDSTQPKSSSSMDMQANTNAL. The disordered stretch occupies residues 100–166; sequence TNSANGSSLN…REDVSPHYNS (67 aa). Residue Lys-183 participates in ATP binding. Catalysis depends on Asp-286, which acts as the Proton acceptor.

The protein belongs to the protein kinase superfamily. CMGC Ser/Thr protein kinase family. CDC2/CDKX subfamily. Component of the SRB8-11 complex which consists of SRB8, SSN2/SRB9, SSN3/SRB10 and SSN8/SRB11. The SRB8-11 complex associates with the Mediator complex. The SSN3/SRB10 and SSN8/SRB11 kinase-cyclin pair also associate with the RNA polymerase II holoenzyme. Interacts with TUP1.

It localises to the nucleus. The catalysed reaction is L-seryl-[protein] + ATP = O-phospho-L-seryl-[protein] + ADP + H(+). The enzyme catalyses L-threonyl-[protein] + ATP = O-phospho-L-threonyl-[protein] + ADP + H(+). It carries out the reaction [DNA-directed RNA polymerase] + ATP = phospho-[DNA-directed RNA polymerase] + ADP + H(+). Functionally, component of the SRB8-11 complex. The SRB8-11 complex is a regulatory module of the Mediator complex which is itself involved in regulation of basal and activated RNA polymerase II-dependent transcription. The SRB8-11 complex may be involved in the transcriptional repression of a subset of genes regulated by Mediator. It may inhibit the association of the Mediator complex with RNA polymerase II to form the holoenzyme complex. The SRB8-11 complex phosphorylates the C-terminal domain (CTD) of the largest subunit of RNA polymerase II RPB1 at serines 2 and 5. The SSN3/SRB10 and SSN8/SRB11 kinase-cyclin pair may also positively and negatively regulate numerous transcriptional activators in response to changes in nutritional and physiological conditions. Phosphorylates GCN4, promoting its ubiquitin-mediated degradation, and MSN2, promoting its nuclear exclusion. Phosphorylates STE12, thereby promoting its degradation and inhibition of filamentous growth. Phosphorylates GAL4, and this phosphorylation is required for efficient galactose-inducible transcription. Also phosphorylates BDF1 and the TAF2 subunit of the TFIID complex. The polypeptide is Meiotic mRNA stability protein kinase SSN3 (SSN3) (Saccharomyces cerevisiae (strain ATCC 204508 / S288c) (Baker's yeast)).